The sequence spans 201 residues: Glycerol-3-phosphate acyltransferase (201 aa).

A run of 6 helical transmembrane segments spans residues 10-30 (MLIG…GLIL), 60-80 (LAAA…LIAA), 86-106 (AAIA…WIGF), 116-136 (LGVL…AWIV), 139-159 (LLTR…PIAL), and 166-186 (ALAA…RANI).

The protein belongs to the PlsY family. Probably interacts with PlsX.

It localises to the cell inner membrane. The catalysed reaction is an acyl phosphate + sn-glycerol 3-phosphate = a 1-acyl-sn-glycero-3-phosphate + phosphate. It functions in the pathway lipid metabolism; phospholipid metabolism. In terms of biological role, catalyzes the transfer of an acyl group from acyl-phosphate (acyl-PO(4)) to glycerol-3-phosphate (G3P) to form lysophosphatidic acid (LPA). This enzyme utilizes acyl-phosphate as fatty acyl donor, but not acyl-CoA or acyl-ACP. The protein is Glycerol-3-phosphate acyltransferase of Brucella ovis (strain ATCC 25840 / 63/290 / NCTC 10512).